Here is a 566-residue protein sequence, read N- to C-terminus: E3 ubiquitin-protein ligase RNF220 (566 aa).

Lys-277 participates in a covalent cross-link: Glycyl lysine isopeptide (Lys-Gly) (interchain with G-Cter in SUMO2). Residues Lys-277–His-297 form a disordered region. Ser-390 is modified (phosphoserine). The stretch at Glu-485 to Lys-513 forms a coiled coil. Residues Cys-514–Ser-522 are required for targeting to the cytoplasm. An RING-type zinc finger spans residues Cys-514–Tyr-553.

As to quaternary structure, interacts with SIN3B. Interacts with CTNNB1 (via Armadillo repeats 2-8). Interacts with USP7 (via MATH domain). Auto-ubiquitinated; leads to proteasomal degradation.

The protein localises to the cytoplasm. It carries out the reaction S-ubiquitinyl-[E2 ubiquitin-conjugating enzyme]-L-cysteine + [acceptor protein]-L-lysine = [E2 ubiquitin-conjugating enzyme]-L-cysteine + N(6)-ubiquitinyl-[acceptor protein]-L-lysine.. The protein operates within protein modification; protein ubiquitination. Functionally, E3 ubiquitin-protein ligase that promotes the ubiquitination and proteasomal degradation of SIN3B. Independently of its E3 ligase activity, acts as a CTNNB1 stabilizer through USP7-mediated deubiquitination of CTNNB1 promoting Wnt signaling. This Bos taurus (Bovine) protein is E3 ubiquitin-protein ligase RNF220 (RNF220).